A 685-amino-acid chain; its full sequence is Eukaryotic peptide chain release factor GTP-binding subunit (685 aa).

Disordered stretches follow at residues 1–34 (MSDS…GYQA), 63–99 (YNPD…GGRG), and 112–234 (GYQA…NVTS). Residue S2 is modified to N-acetylserine. Residues 2-239 (SDSNQGNNQQ…ANVTSADALI (238 aa)) form an interaction with PAB1 region. A prion domain (PrD) region spans residues 5–135 (NQGNNQQNYQ…LNDFQKQQKQ (131 aa)). A compositionally biased stretch (polar residues) spans 117–129 (FQPQSQGMSLNDF). A charged region spans residues 139-249 (KPKKTLKLVS…KEQEEEVDDE (111 aa)). Residues 166 to 222 (AESDKKEEEKSAETKEPTKEPTKVEEPVKKEEKPVQTEEKTEEKSELPKVEDLKISE) show a composition bias toward basic and acidic residues. Polar residues predominate over residues 223–234 (STHNTNNANVTS). The 227-residue stretch at 258–484 (KDHVSLIFMG…YLDTMNHVDR (227 aa)) folds into the tr-type G domain. Positions 267-274 (GHVDAGKS) are G1. A GTP-binding site is contributed by 267-274 (GHVDAGKS). Positions 323 to 327 (GKTIE) are G2. Positions 344–347 (DAPG) are G3. GTP is bound by residues 406–409 (NKMD) and 449–450 (GY). Residues 406 to 409 (NKMD) form a G4 region. The tract at residues 448–450 (SGY) is G5. At S571 the chain carries Phosphoserine.

It belongs to the TRAFAC class translation factor GTPase superfamily. Classic translation factor GTPase family. ERF3 subfamily. Heterodimer of two subunits, one of which binds GTP. Interacts with polyadenylate-binding protein PAB1, and TPA1.

It localises to the cytoplasm. It carries out the reaction GTP + H2O = GDP + phosphate + H(+). GTPase component of the eRF1-eRF3-GTP ternary complex, a ternary complex that mediates translation termination in response to the termination codons UAA, UAG and UGA. SUP35/eRF3 mediates SUP45/eRF1 delivery to stop codons: The eRF1-eRF3-GTP complex binds to a stop codon in the ribosomal A-site. GTP hydrolysis by SUP35/eRF3 induces a conformational change that leads to its dissociation, permitting SUP45/eRF1 to accommodate fully in the A-site. Recruited by polyadenylate-binding protein PAB1 to poly(A)-tails of mRNAs. Interaction with PAB1 is also required for regulation of normal mRNA decay through translation termination-coupled poly(A) shortening. In Saccharomyces cerevisiae (strain ATCC 204508 / S288c) (Baker's yeast), this protein is Eukaryotic peptide chain release factor GTP-binding subunit (SUP35).